The following is a 660-amino-acid chain: Bifunctional polymyxin resistance protein ArnA (660 aa).

The segment at 1–304 is formyltransferase ArnAFT; sequence MKAVIFAYHD…TLGLVAGARL (304 aa). H104 serves as the catalytic Proton donor; for formyltransferase activity. (6R)-10-formyltetrahydrofolate contacts are provided by residues R114 and 136-140; that span reads VKRAD. The segment at 314–660 is dehydrogenase ArnADH; the sequence is RRIRVLILGV…RSVDVAERAS (347 aa). NAD(+) contacts are provided by residues D347 and 368 to 369; that span reads DI. UDP-alpha-D-glucuronate-binding positions include A393, Y398, and 432–433; that span reads TS. E434 acts as the Proton acceptor; for decarboxylase activity in catalysis. UDP-alpha-D-glucuronate contacts are provided by residues R460, N492, 526–535, and Y613; that span reads KLIDGGQQKR. R619 acts as the Proton donor; for decarboxylase activity in catalysis.

The protein in the N-terminal section; belongs to the Fmt family. UDP-L-Ara4N formyltransferase subfamily. It in the C-terminal section; belongs to the NAD(P)-dependent epimerase/dehydratase family. UDP-glucuronic acid decarboxylase subfamily. Homohexamer, formed by a dimer of trimers.

It carries out the reaction UDP-alpha-D-glucuronate + NAD(+) = UDP-beta-L-threo-pentopyranos-4-ulose + CO2 + NADH. It catalyses the reaction UDP-4-amino-4-deoxy-beta-L-arabinose + (6R)-10-formyltetrahydrofolate = UDP-4-deoxy-4-formamido-beta-L-arabinose + (6S)-5,6,7,8-tetrahydrofolate + H(+). It participates in nucleotide-sugar biosynthesis; UDP-4-deoxy-4-formamido-beta-L-arabinose biosynthesis; UDP-4-deoxy-4-formamido-beta-L-arabinose from UDP-alpha-D-glucuronate: step 1/3. The protein operates within nucleotide-sugar biosynthesis; UDP-4-deoxy-4-formamido-beta-L-arabinose biosynthesis; UDP-4-deoxy-4-formamido-beta-L-arabinose from UDP-alpha-D-glucuronate: step 3/3. Its pathway is bacterial outer membrane biogenesis; lipopolysaccharide biosynthesis. In terms of biological role, bifunctional enzyme that catalyzes the oxidative decarboxylation of UDP-glucuronic acid (UDP-GlcUA) to UDP-4-keto-arabinose (UDP-Ara4O) and the addition of a formyl group to UDP-4-amino-4-deoxy-L-arabinose (UDP-L-Ara4N) to form UDP-L-4-formamido-arabinose (UDP-L-Ara4FN). The modified arabinose is attached to lipid A and is required for resistance to polymyxin and cationic antimicrobial peptides. The protein is Bifunctional polymyxin resistance protein ArnA of Salmonella newport (strain SL254).